Consider the following 269-residue polypeptide: MRNDVHLGHKARKRFGQNFLNDPYIIDGIVSAINPKPGQNLVEIGPGLGAITEPVGREVDKFTVIELDRDLAERLRNHPDLADKLTIHEGDAMRFDFTQLVKPNNKLRIFGNLPYNISTPLMFHLFEFHKDIQDMHFMLQKEVVNRLAAGPGSKAYGRLTVMAQYYCKVVPVLEVPPTAFVPPPKVDSAVVRLVPYEELPCPAKDLRLLDRVCREGFNQRRKTVRNCYKSLLSAEVLEELGVNPSMRPENLTLQQFVAMANWLADNPQH.

Positions 18, 20, 45, 66, 91, and 112 each coordinate S-adenosyl-L-methionine.

The protein belongs to the class I-like SAM-binding methyltransferase superfamily. rRNA adenine N(6)-methyltransferase family. RsmA subfamily.

The protein resides in the cytoplasm. It carries out the reaction adenosine(1518)/adenosine(1519) in 16S rRNA + 4 S-adenosyl-L-methionine = N(6)-dimethyladenosine(1518)/N(6)-dimethyladenosine(1519) in 16S rRNA + 4 S-adenosyl-L-homocysteine + 4 H(+). Functionally, specifically dimethylates two adjacent adenosines (A1518 and A1519) in the loop of a conserved hairpin near the 3'-end of 16S rRNA in the 30S particle. May play a critical role in biogenesis of 30S subunits. The protein is Ribosomal RNA small subunit methyltransferase A of Vibrio parahaemolyticus serotype O3:K6 (strain RIMD 2210633).